Here is a 214-residue protein sequence, read N- to C-terminus: Adenylate kinase (214 aa).

Residue 12–17 coordinates ATP; that stretch reads GVGKGT. Positions 32–61 are NMP; it reads STGNIFRSQIASNSELGIKLKEIVESGGYV. Residues threonine 33, arginine 38, 59–61, 88–91, and glutamine 95 contribute to the AMP site; these read GYV and GYPR. Residues 126–163 form an LID region; that stretch reads GRRICPSCNAQYHIYFKKSKLDTKCEIDQSELIQRKDD. Arginine 127 contacts ATP. Residues cysteine 130, cysteine 133, cysteine 150, and aspartate 153 each contribute to the Zn(2+) site. AMP is bound by residues arginine 160 and arginine 171. Position 199 (lysine 199) interacts with ATP.

Belongs to the adenylate kinase family. In terms of assembly, monomer.

The protein resides in the cytoplasm. The catalysed reaction is AMP + ATP = 2 ADP. It functions in the pathway purine metabolism; AMP biosynthesis via salvage pathway; AMP from ADP: step 1/1. In terms of biological role, catalyzes the reversible transfer of the terminal phosphate group between ATP and AMP. Plays an important role in cellular energy homeostasis and in adenine nucleotide metabolism. The sequence is that of Adenylate kinase from Mycoplasmopsis pulmonis (strain UAB CTIP) (Mycoplasma pulmonis).